Reading from the N-terminus, the 147-residue chain is Large ribosomal subunit protein bL9 (147 aa).

The protein belongs to the bacterial ribosomal protein bL9 family.

Its function is as follows. Binds to the 23S rRNA. This is Large ribosomal subunit protein bL9 from Campylobacter fetus subsp. fetus (strain 82-40).